We begin with the raw amino-acid sequence, 582 residues long: Putative BTB/POZ domain-containing protein At3g08660 (582 aa).

The segment at 1 to 21 (MGSDSTLSLPSSSPPCNNRSS) is disordered. In terms of domain architecture, BTB spans 36-103 (GDIIVVVDGE…CYGINFDITA (68 aa)). An NPH3 domain is found at 196–466 (EMWTEELSAL…VRVLYTEQLR (271 aa)). Phosphotyrosine is present on Tyr-407. A disordered region spans residues 558–582 (GGETRQKVNRKSRSVSERKSSRSGR). The span at 571 to 582 (SVSERKSSRSGR) shows a compositional bias: basic and acidic residues.

It belongs to the NPH3 family.

It functions in the pathway protein modification; protein ubiquitination. Functionally, may act as a substrate-specific adapter of an E3 ubiquitin-protein ligase complex (CUL3-RBX1-BTB) which mediates the ubiquitination and subsequent proteasomal degradation of target proteins. The chain is Putative BTB/POZ domain-containing protein At3g08660 from Arabidopsis thaliana (Mouse-ear cress).